Here is an 893-residue protein sequence, read N- to C-terminus: Sulfate permease 2 (893 aa).

A disordered region spans residues 1–25 (MSREGYPNFEEVEIPDFQETNNTVP). Over 1 to 131 (MSREGYPNFE…VFPIINWLPH (131 aa)) the chain is Cytoplasmic. A helical membrane pass occupies residues 132 to 152 (YNFSWFTADLIAGITIGCVLV). Residues 153–163 (PQSMSYAQVAT) lie on the Extracellular side of the membrane. A helical membrane pass occupies residues 164-184 (LPAQYGLYSSFIGAYSYSFFA). At 185–188 (TSKD) the chain is on the cytoplasmic side. Residues 189-209 (VCIGPVAVMSLQTAKVIADVT) form a helical membrane-spanning segment. The Extracellular segment spans residues 210–221 (AKYPDGDSAITG). Residues 222–242 (PVIATTLALLCGIISAAVGFL) traverse the membrane as a helical segment. The Cytoplasmic portion of the chain corresponds to 243 to 244 (RL). A helical membrane pass occupies residues 245–265 (GFLVELISLNAVAGFMTGSAF). The Extracellular segment spans residues 266–305 (NILWGQVPALMGYNSLVNTRAATYKVVIETLKHLPDTKLD). A helical transmembrane segment spans residues 306–326 (AVFGLIPLFLLYVWKWWCGTY). Residues 327 to 350 (GPRLNDRYNSKNPRLHKIIKWTYF) lie on the Cytoplasmic side of the membrane. Residues 351–371 (YAQASRNGIIIIVFTCIGWAI) form a helical membrane-spanning segment. At 372–399 (TRGKSKSERPISILGSVPSGLKEVGVFH) the chain is on the extracellular side. The chain crosses the membrane as a helical span at residues 400–420 (VPPGLMSKLGPNLPASIIVLL). The Cytoplasmic portion of the chain corresponds to 421–443 (LEHIAISKSFGRINDYKVVPDQE). The chain crosses the membrane as a helical span at residues 444-464 (LIAIGVSNLLGTFFNAYPATG). Residues 465–483 (SFSRSALKAKCNVRTPLSG) lie on the Extracellular side of the membrane. The chain crosses the membrane as a helical span at residues 484 to 504 (LFSGSCVLLALYCLTGAFFYI). The Cytoplasmic segment spans residues 505–532 (PKATLSAVIIHAVSDLLASYQTTWNFWK). A helical membrane pass occupies residues 533–551 (MNPLDFICFIVTVLITVFA). The Extracellular portion of the chain corresponds to 552–559 (SIEDGIYF). A helical transmembrane segment spans residues 560 to 580 (AMCWSCAMLILKVAFPAGKFL). The Cytoplasmic portion of the chain corresponds to 581 to 893 (GRVEVAEVTD…DIPDFAKWDI (313 aa)). An STAS domain is found at 676-854 (DVQILPPPDG…SIVAGHTSYH (179 aa)).

Belongs to the SLC26A/SulP transporter (TC 2.A.53) family.

The protein resides in the membrane. In terms of biological role, high affinity uptake of sulfate into the cell. This Saccharomyces cerevisiae (strain ATCC 204508 / S288c) (Baker's yeast) protein is Sulfate permease 2 (SUL2).